The following is a 207-amino-acid chain: Small ribosomal subunit protein uS4 (207 aa).

A disordered region spans residues 31 to 54 (KCKLDTKPGQHGRTSGSRTSDYGN). Residues 42–53 (GRTSGSRTSDYG) show a composition bias toward polar residues. The S4 RNA-binding domain maps to 97-158 (SRLDNVVYRM…KAKKQARITE (62 aa)).

This sequence belongs to the universal ribosomal protein uS4 family. In terms of assembly, part of the 30S ribosomal subunit. Contacts protein S5. The interaction surface between S4 and S5 is involved in control of translational fidelity.

Functionally, one of the primary rRNA binding proteins, it binds directly to 16S rRNA where it nucleates assembly of the body of the 30S subunit. In terms of biological role, with S5 and S12 plays an important role in translational accuracy. The chain is Small ribosomal subunit protein uS4 from Polynucleobacter asymbioticus (strain DSM 18221 / CIP 109841 / QLW-P1DMWA-1) (Polynucleobacter necessarius subsp. asymbioticus).